Here is a 132-residue protein sequence, read N- to C-terminus: Small ribosomal subunit protein uS8 (132 aa).

The protein belongs to the universal ribosomal protein uS8 family. Part of the 30S ribosomal subunit. Contacts proteins S5 and S12.

In terms of biological role, one of the primary rRNA binding proteins, it binds directly to 16S rRNA central domain where it helps coordinate assembly of the platform of the 30S subunit. The protein is Small ribosomal subunit protein uS8 of Pediococcus pentosaceus (strain ATCC 25745 / CCUG 21536 / LMG 10740 / 183-1w).